Reading from the N-terminus, the 69-residue chain is Amphipathic peptide OcyC2 (69 aa).

A signal peptide spans 1 to 23 (MKTQFAILMIAVVLMQMLVQTEG). I37 is subject to Isoleucine amide. Positions 41–69 (GLKKLDQLDDTFDSDLSDADVKLLREMFK) are excised as a propeptide.

Belongs to the non-disulfide-bridged peptide (NDBP) superfamily. Short antimicrobial peptide (group 4) family. As to expression, expressed by the venom gland.

The protein resides in the secreted. Its subcellular location is the target cell membrane. In terms of biological role, amphipathic peptide with antimicrobial activity. Shows antifungal activity with MIC values ranging from 25 to 200 uM. Does not show antifungal activity against Candida glabrata (ATCC90030) and Candida parapsilosis (ATCC22019) (MIC&gt;400 uM). This is Amphipathic peptide OcyC2 from Opisthacanthus cayaporum (South American scorpion).